Here is a 304-residue protein sequence, read N- to C-terminus: bZIP transcription factor 50 (304 aa).

Topologically, residues 1–222 (MDVEFFADLD…MQESAVLTET (222 aa)) are cytoplasmic. Disordered stretches follow at residues 26–60 (GSGV…SREA) and 94–163 (GEEE…ERKK). A compositionally biased stretch (low complexity) spans 45–59 (SPESVSSRRPSPSRE). The segment covering 127 to 139 (EKEDVEAEVDGDD) has biased composition (acidic residues). One can recognise a bZIP domain in the interval 141 to 203 (MSKKKRRQMR…NMALRQSLLK (63 aa)). The basic motif stretch occupies residues 143-167 (KKKRRQMRNRDSAMKSRERKKMYVK). The segment covering 150–163 (RNRDSAMKSRERKK) has biased composition (basic and acidic residues). Positions 169 to 183 (LETKSKYLEAECRRL) are leucine-zipper. Residues 223–243 (LPLVSLLWLVSIVCLLPVPGL) form a helical membrane-spanning segment. Residues 244 to 304 (PNRNPVARSS…GPFRLAAAAC (61 aa)) are Lumenal-facing.

The protein belongs to the bZIP family.

The protein localises to the endoplasmic reticulum membrane. It localises to the nucleus. Transcriptionally activated by IRE1 in response to endoplasmic reticulum (ER) stress. IRE1 cleaves a 20-bp fragment causing a frameshift of the mRNA transcript, leading to a nuclear isoform of the BZIP50 activator. Its function is as follows. Transcription factor involved in endoplasmic reticulum (ER) stress response. Acts downstream of the ER stress sensors IRE1, BZIP39 and BZIP60 to activate BiP chaperone genes. The polypeptide is bZIP transcription factor 50 (Oryza sativa subsp. japonica (Rice)).